We begin with the raw amino-acid sequence, 293 residues long: MSLIDWFAARRKDQFVGKVSQDADEGDGLWVKCSECSQVAYRKDLISNFNVCSNCGHHNRINSDERINIIADKNSFEEFDSLLSPTDPLGFKDRRSYADRIKESQAGTGLRDGVVTGICSVNSMPLALAVMDFRFMGGSMGSVVGEKITRIIERATLENFPILIVCASGGARMQEGMLSLMQMAKISGALKKHKEKNLLYMPLLTHPTTGGVTASFAMLGDLILAEPKALIGFAGRRVIEQTLREKLPDNFQTAEYLLEHGFVDVIVKRKDLKTTLAKILKIHGVKELAEANT.

In terms of domain architecture, CoA carboxyltransferase N-terminal spans 29-293 (LWVKCSECSQ…GVKELAEANT (265 aa)). Zn(2+) is bound by residues cysteine 33, cysteine 36, cysteine 52, and cysteine 55. Residues 33 to 55 (CSECSQVAYRKDLISNFNVCSNC) form a C4-type zinc finger.

It belongs to the AccD/PCCB family. In terms of assembly, acetyl-CoA carboxylase is a heterohexamer composed of biotin carboxyl carrier protein (AccB), biotin carboxylase (AccC) and two subunits each of ACCase subunit alpha (AccA) and ACCase subunit beta (AccD). Requires Zn(2+) as cofactor.

It localises to the cytoplasm. The catalysed reaction is N(6)-carboxybiotinyl-L-lysyl-[protein] + acetyl-CoA = N(6)-biotinyl-L-lysyl-[protein] + malonyl-CoA. Its pathway is lipid metabolism; malonyl-CoA biosynthesis; malonyl-CoA from acetyl-CoA: step 1/1. Component of the acetyl coenzyme A carboxylase (ACC) complex. Biotin carboxylase (BC) catalyzes the carboxylation of biotin on its carrier protein (BCCP) and then the CO(2) group is transferred by the transcarboxylase to acetyl-CoA to form malonyl-CoA. In Prochlorococcus marinus (strain MIT 9301), this protein is Acetyl-coenzyme A carboxylase carboxyl transferase subunit beta.